The chain runs to 692 residues: Elongation factor G (692 aa).

A tr-type G domain is found at Glu-8–Leu-282. GTP-binding positions include Ala-17–Thr-24, Asp-81–His-85, and Asn-135–Asp-138.

It belongs to the TRAFAC class translation factor GTPase superfamily. Classic translation factor GTPase family. EF-G/EF-2 subfamily.

The protein resides in the cytoplasm. Catalyzes the GTP-dependent ribosomal translocation step during translation elongation. During this step, the ribosome changes from the pre-translocational (PRE) to the post-translocational (POST) state as the newly formed A-site-bound peptidyl-tRNA and P-site-bound deacylated tRNA move to the P and E sites, respectively. Catalyzes the coordinated movement of the two tRNA molecules, the mRNA and conformational changes in the ribosome. This Halalkalibacterium halodurans (strain ATCC BAA-125 / DSM 18197 / FERM 7344 / JCM 9153 / C-125) (Bacillus halodurans) protein is Elongation factor G (fusA).